We begin with the raw amino-acid sequence, 747 residues long: Myotubularin-related protein 12 (747 aa).

Residues 205–643 form the Myotubularin phosphatase domain; that stretch reads FDTPKDWCWE…PEIKVWAQRY (439 aa). An interaction with MTM1 region spans residues 449–558; sequence VPIFLLFLDC…RGQQKGSRFK (110 aa). The segment at 548 to 575 is disordered; it reads DRGQQKGSRFKHQRQLSLPLTQSKSSPK. Polar residues predominate over residues 562 to 572; it reads QLSLPLTQSKS. Residues Ser564 and Ser601 each carry the phosphoserine modification.

Belongs to the protein-tyrosine phosphatase family. Non-receptor class myotubularin subfamily. Heterodimer with lipid phosphatase MTM1. Heterodimer with lipid phosphatase MTMR2. As to expression, expressed in skeletal muscles (at protein level).

The protein localises to the cytoplasm. It is found in the sarcoplasmic reticulum. The protein resides in the myofibril. It localises to the sarcomere. Its function is as follows. Acts as an adapter for the myotubularin-related phosphatases. Regulates phosphatase MTM1 protein stability and possibly its intracellular location. By stabilizing MTM1 protein levels, required for skeletal muscle maintenance but not for myogenesis. In Mus musculus (Mouse), this protein is Myotubularin-related protein 12 (Mtmr12).